The primary structure comprises 430 residues: Long-chain specific acyl-CoA dehydrogenase, mitochondrial (430 aa).

The N-terminal 30 residues, 1–30, are a transit peptide targeting the mitochondrion; the sequence is MATRLLRGSLRLWGGLCAPRLPTASRCSHS. N6-acetyllysine is present on Lys-42. Residues Ser-54 and Ser-55 each carry the phosphoserine modification. Lys-66 and Lys-81 each carry N6-acetyllysine; alternate. N6-succinyllysine; alternate occurs at positions 66 and 81. N6-acetyllysine occurs at positions 92 and 95. Lys-165 is modified (N6-succinyllysine). FAD-binding positions include 170–179 and 203–205; these read IAMTEPGAGS and FIT. Ser-179 provides a ligand contact to substrate. Substrate is bound at residue 227–228; the sequence is AH. Lys-240 carries the N6-succinyllysine modification. 2 positions are modified to N6-acetyllysine; alternate: Lys-254 and Lys-279. N6-succinyllysine; alternate occurs at positions 254 and 279. Residues Tyr-282 and 289-292 contribute to the substrate site; that span reads PQER. Catalysis depends on Glu-291, which acts as the Proton acceptor. FAD is bound at residue Arg-317. The residue at position 318 (Lys-318) is an N6-acetyllysine. The residue at position 322 (Lys-322) is an N6-acetyllysine; alternate. Lys-322 bears the N6-succinyllysine; alternate mark. Gln-328 is an FAD binding site. Lys-358 carries the N6-acetyllysine modification. Ser-362 is subject to Phosphoserine. 385–389 lines the FAD pocket; the sequence is QLHGG. 412–413 provides a ligand contact to substrate; sequence GG. 414-416 lines the FAD pocket; the sequence is TNE.

It belongs to the acyl-CoA dehydrogenase family. As to quaternary structure, homotetramer. It depends on FAD as a cofactor. Post-translationally, acetylation at Lys-318 and Lys-322 in proximity of the cofactor-binding sites strongly reduces catalytic activity. These sites are deacetylated by SIRT3.

It localises to the mitochondrion matrix. The enzyme catalyses a long-chain 2,3-saturated fatty acyl-CoA + oxidized [electron-transfer flavoprotein] + H(+) = a long-chain (2E)-enoyl-CoA + reduced [electron-transfer flavoprotein]. It carries out the reaction hexanoyl-CoA + oxidized [electron-transfer flavoprotein] + H(+) = (2E)-hexenoyl-CoA + reduced [electron-transfer flavoprotein]. It catalyses the reaction octanoyl-CoA + oxidized [electron-transfer flavoprotein] + H(+) = (2E)-octenoyl-CoA + reduced [electron-transfer flavoprotein]. The catalysed reaction is decanoyl-CoA + oxidized [electron-transfer flavoprotein] + H(+) = (2E)-decenoyl-CoA + reduced [electron-transfer flavoprotein]. The enzyme catalyses dodecanoyl-CoA + oxidized [electron-transfer flavoprotein] + H(+) = (2E)-dodecenoyl-CoA + reduced [electron-transfer flavoprotein]. It carries out the reaction tetradecanoyl-CoA + oxidized [electron-transfer flavoprotein] + H(+) = (2E)-tetradecenoyl-CoA + reduced [electron-transfer flavoprotein]. It catalyses the reaction oxidized [electron-transfer flavoprotein] + hexadecanoyl-CoA + H(+) = (2E)-hexadecenoyl-CoA + reduced [electron-transfer flavoprotein]. The catalysed reaction is octadecanoyl-CoA + oxidized [electron-transfer flavoprotein] + H(+) = (2E)-octadecenoyl-CoA + reduced [electron-transfer flavoprotein]. The enzyme catalyses eicosanoyl-CoA + oxidized [electron-transfer flavoprotein] + H(+) = (2E)-eicosenoyl-CoA + reduced [electron-transfer flavoprotein]. It carries out the reaction docosanoyl-CoA + oxidized [electron-transfer flavoprotein] + H(+) = (2E)-docosenoyl-CoA + reduced [electron-transfer flavoprotein]. It catalyses the reaction tetracosanoyl-CoA + oxidized [electron-transfer flavoprotein] + H(+) = (2E)-tetracosenoyl-CoA + reduced [electron-transfer flavoprotein]. The catalysed reaction is (5E)-tetradecenoyl-CoA + oxidized [electron-transfer flavoprotein] + H(+) = (2E,5E)-tetradecadienoyl-CoA + reduced [electron-transfer flavoprotein]. The enzyme catalyses (5Z)-tetradecenoyl-CoA + oxidized [electron-transfer flavoprotein] + H(+) = (2E,5Z)-tetradecadienoyl-CoA + reduced [electron-transfer flavoprotein]. It carries out the reaction oxidized [electron-transfer flavoprotein] + (9Z)-octadecenoyl-CoA + H(+) = (2E,9Z)-octadecadienoyl-CoA + reduced [electron-transfer flavoprotein]. Its pathway is lipid metabolism; mitochondrial fatty acid beta-oxidation. Functionally, long-chain specific acyl-CoA dehydrogenase is one of the acyl-CoA dehydrogenases that catalyze the first step of mitochondrial fatty acid beta-oxidation, an aerobic process breaking down fatty acids into acetyl-CoA and allowing the production of energy from fats. The first step of fatty acid beta-oxidation consists in the removal of one hydrogen from C-2 and C-3 of the straight-chain fatty acyl-CoA thioester, resulting in the formation of trans-2-enoyl-CoA. Among the different mitochondrial acyl-CoA dehydrogenases, long-chain specific acyl-CoA dehydrogenase can act on saturated and unsaturated acyl-CoAs with 6 to 24 carbons with a preference for 8 to 18 carbons long primary chains. The sequence is that of Long-chain specific acyl-CoA dehydrogenase, mitochondrial from Sus scrofa (Pig).